The primary structure comprises 144 residues: 3-hydroxyacyl-[acyl-carrier-protein] dehydratase FabZ (144 aa).

Residue histidine 47 is part of the active site.

Belongs to the thioester dehydratase family. FabZ subfamily.

The protein localises to the cytoplasm. The catalysed reaction is a (3R)-hydroxyacyl-[ACP] = a (2E)-enoyl-[ACP] + H2O. In terms of biological role, involved in unsaturated fatty acids biosynthesis. Catalyzes the dehydration of short chain beta-hydroxyacyl-ACPs and long chain saturated and unsaturated beta-hydroxyacyl-ACPs. The sequence is that of 3-hydroxyacyl-[acyl-carrier-protein] dehydratase FabZ from Nitrosomonas eutropha (strain DSM 101675 / C91 / Nm57).